We begin with the raw amino-acid sequence, 358 residues long: Peptide chain release factor 1 (358 aa).

Gln-235 is subject to N5-methylglutamine.

The protein belongs to the prokaryotic/mitochondrial release factor family. In terms of processing, methylated by PrmC. Methylation increases the termination efficiency of RF1.

Its subcellular location is the cytoplasm. In terms of biological role, peptide chain release factor 1 directs the termination of translation in response to the peptide chain termination codons UAG and UAA. The polypeptide is Peptide chain release factor 1 (Neisseria gonorrhoeae (strain NCCP11945)).